The chain runs to 130 residues: Small ribosomal subunit protein uS9 (130 aa).

The segment at 111–130 (KERRKYGLKKARKAPQFSKR) is disordered.

The protein belongs to the universal ribosomal protein uS9 family.

The protein is Small ribosomal subunit protein uS9 of Thermoanaerobacter sp. (strain X514).